The primary structure comprises 177 residues: Inner membrane protein p22 (177 aa).

The Intravirion segment spans residues 1 to 7 (MFNIKMT). Residues 8 to 28 (ISVLLIALIVLLIIILVVFLY) traverse the membrane as a helical segment. Topologically, residues 29-177 (YKKQQPPKKV…IALPRNHKHA (149 aa)) are virion surface.

Belongs to the asfivirus inner membrane protein p22 family.

The protein localises to the virion membrane. It localises to the host cell membrane. The chain is Inner membrane protein p22 from African swine fever virus (isolate Warthog/Namibia/Wart80/1980) (ASFV).